We begin with the raw amino-acid sequence, 124 residues long: Large ribosomal subunit protein bL17 (124 aa).

The protein belongs to the bacterial ribosomal protein bL17 family. In terms of assembly, part of the 50S ribosomal subunit. Contacts protein L32.

The polypeptide is Large ribosomal subunit protein bL17 (Acidithiobacillus ferrooxidans (strain ATCC 23270 / DSM 14882 / CIP 104768 / NCIMB 8455) (Ferrobacillus ferrooxidans (strain ATCC 23270))).